Here is a 135-residue protein sequence, read N- to C-terminus: C-type lectin Cal (135 aa).

4 disulfide bridges follow: Cys-3–Cys-14, Cys-31–Cys-131, Cys-38–Cys-133, and Cys-106–Cys-123. A C-type lectin domain is found at 10-132; sequence MNGLCYKIFN…CESKDAFLCQ (123 aa). Ca(2+) is bound by residues Gln-96, Asp-98, Glu-104, Asn-119, and Asp-120. A Galactose-binding motif is present at residues 96–98; that stretch reads QPD.

This sequence belongs to the true venom lectin family. In terms of assembly, homodecamer of disulfide-linked dimers arranged in two pseudo-5-fold symmetric pentamers. As to expression, expressed by the venom gland.

The protein resides in the secreted. Its function is as follows. Galactose-binding protein which recognizes specific carbohydrate structures and agglutinates a variety of animal cells by binding to cell-surface glycoproteins and glycolipids. Calcium-dependent lectin. Shows high hemagglutinating activity (MHC=10 ng/ml). In Crotalus atrox (Western diamondback rattlesnake), this protein is C-type lectin Cal.